Here is a 132-residue protein sequence, read N- to C-terminus: Arginine decarboxylase proenzyme (132 aa).

The Schiff-base intermediate with substrate; via pyruvic acid role is filled by Ser70. At Ser70 the chain carries Pyruvic acid (Ser); by autocatalysis. His75 functions as the Proton acceptor; for processing activity in the catalytic mechanism. The active-site Proton donor; for catalytic activity is Cys90.

Belongs to the prokaryotic AdoMetDC family. Type 1 subfamily. In terms of assembly, heterooctamer of four alpha and four beta chains arranged as a tetramer of alpha/beta heterodimers. The cofactor is pyruvate. In terms of processing, is synthesized initially as an inactive proenzyme. Formation of the active enzyme involves a self-maturation process in which the active site pyruvoyl group is generated from an internal serine residue via an autocatalytic post-translational modification. Two non-identical subunits are generated from the proenzyme in this reaction, and the pyruvate is formed at the N-terminus of the alpha chain, which is derived from the carboxyl end of the proenzyme. The post-translation cleavage follows an unusual pathway, termed non-hydrolytic serinolysis, in which the side chain hydroxyl group of the serine supplies its oxygen atom to form the C-terminus of the beta chain, while the remainder of the serine residue undergoes an oxidative deamination to produce ammonia and the pyruvoyl group blocking the N-terminus of the alpha chain.

The catalysed reaction is L-arginine + H(+) = agmatine + CO2. It functions in the pathway amine and polyamine biosynthesis; agmatine biosynthesis; agmatine from L-arginine: step 1/1. Functionally, specifically catalyzes the decarboxylation of L-arginine to agmatine. Has no S-adenosylmethionine decarboxylase (AdoMetDC) activity. In Aeropyrum pernix (strain ATCC 700893 / DSM 11879 / JCM 9820 / NBRC 100138 / K1), this protein is Arginine decarboxylase proenzyme.